A 361-amino-acid polypeptide reads, in one-letter code: Chorismate synthase (361 aa).

Positions 48 and 54 each coordinate NADP(+). FMN-binding positions include 125 to 127 (RSS), 240 to 241 (NA), Gly-286, 301 to 305 (KPTSS), and Arg-327.

This sequence belongs to the chorismate synthase family. In terms of assembly, homotetramer. It depends on FMNH2 as a cofactor.

The enzyme catalyses 5-O-(1-carboxyvinyl)-3-phosphoshikimate = chorismate + phosphate. It participates in metabolic intermediate biosynthesis; chorismate biosynthesis; chorismate from D-erythrose 4-phosphate and phosphoenolpyruvate: step 7/7. In terms of biological role, catalyzes the anti-1,4-elimination of the C-3 phosphate and the C-6 proR hydrogen from 5-enolpyruvylshikimate-3-phosphate (EPSP) to yield chorismate, which is the branch point compound that serves as the starting substrate for the three terminal pathways of aromatic amino acid biosynthesis. This reaction introduces a second double bond into the aromatic ring system. This chain is Chorismate synthase, found in Magnetococcus marinus (strain ATCC BAA-1437 / JCM 17883 / MC-1).